We begin with the raw amino-acid sequence, 408 residues long: Argininosuccinate synthase (408 aa).

ATP is bound by residues 10-18 (AYSGGLDTS) and Ala-37. Residues Tyr-90 and Ser-95 each contribute to the L-citrulline site. Position 120 (Gly-120) interacts with ATP. L-aspartate contacts are provided by Thr-122, Asn-126, and Asp-127. Residue Asn-126 coordinates L-citrulline. L-citrulline-binding residues include Arg-130, Ser-181, Ser-190, Glu-266, and Tyr-278.

This sequence belongs to the argininosuccinate synthase family. Type 1 subfamily. Homotetramer.

It is found in the cytoplasm. The catalysed reaction is L-citrulline + L-aspartate + ATP = 2-(N(omega)-L-arginino)succinate + AMP + diphosphate + H(+). It functions in the pathway amino-acid biosynthesis; L-arginine biosynthesis; L-arginine from L-ornithine and carbamoyl phosphate: step 2/3. This Cereibacter sphaeroides (strain ATCC 17029 / ATH 2.4.9) (Rhodobacter sphaeroides) protein is Argininosuccinate synthase.